The sequence spans 33 residues: MSDIN-like toxin proprotein 2 (33 aa).

The propeptide occupies 1–10; sequence MSDINATRLP. The cyclopeptide (Ile-Pro) cross-link spans 11–18; that stretch reads IILAPIIP. The propeptide occupies 19–33; sequence CINDDVNSTLTSGER.

Belongs to the MSDIN fungal toxin family. Post-translationally, processed by the macrocyclase-peptidase enzyme POPB to yield a toxic cyclic octapeptide. POPB first removes 10 residues from the N-terminus. Conformational trapping of the remaining peptide forces the enzyme to release this intermediate rather than proceed to macrocyclization. The enzyme rebinds the remaining peptide in a different conformation and catalyzes macrocyclization of the N-terminal 8 residues.

Probable toxin that belongs to the MSDIN-like toxin family responsible for a large number of food poisoning cases and deaths. The chain is MSDIN-like toxin proprotein 2 from Amanita phalloides (Death cap).